The chain runs to 310 residues: Membrane protein insertase YidC 2 (310 aa).

The signal sequence occupies residues 1–23 (MKKTLKRILFSSLSLSILLLLTG). The N-palmitoyl cysteine moiety is linked to residue C24. C24 carries S-diacylglycerol cysteine lipidation. 5 consecutive transmembrane segments (helical) span residues 33 to 53 (PYGV…TYFA), 58 to 78 (LGFG…ILPL), 135 to 155 (FGGI…AIFF), 180 to 200 (LTVI…QGVP), and 219 to 239 (VFMS…GGIF). Residues 262 to 310 (EYTKNPPKAYKSNNARKDVTSSTKTTESNQAIITSKKTNRNAGKQKRRG) are disordered. Over residues 281–297 (TSSTKTTESNQAIITSK) the composition is skewed to polar residues. A compositionally biased stretch (basic residues) spans 298 to 310 (KTNRNAGKQKRRG).

This sequence belongs to the OXA1/ALB3/YidC family. Type 2 subfamily.

The protein resides in the cell membrane. Required for the insertion and/or proper folding and/or complex formation of integral membrane proteins into the membrane. Involved in integration of membrane proteins that insert both dependently and independently of the Sec translocase complex, as well as at least some lipoproteins. In Streptococcus agalactiae serotype III (strain NEM316), this protein is Membrane protein insertase YidC 2.